The primary structure comprises 60 residues: Large ribosomal subunit protein uL30 (60 aa).

It belongs to the universal ribosomal protein uL30 family. In terms of assembly, part of the 50S ribosomal subunit.

The sequence is that of Large ribosomal subunit protein uL30 from Moorella thermoacetica (strain ATCC 39073 / JCM 9320).